Here is a 118-residue protein sequence, read N- to C-terminus: Cell division protein FtsB (118 aa).

At 1 to 3 the chain is on the cytoplasmic side; that stretch reads MRL. The chain crosses the membrane as a helical span at residues 4–21; the sequence is LFLVLLVLLGLIQYPLWL. Residues 22–118 lie on the Periplasmic side of the membrane; it reads GKGGWFKVWD…PRPPATPPRR (97 aa). A coiled-coil region spans residues 28 to 62; it reads KVWDLQRQVAEQRETNDGLRARNTALEAEVRDLAT. Residues 88 to 118 are disordered; that stretch reads LPPGTPLPSDNSTPQASALSKPRPPATPPRR. Positions 95 to 105 are enriched in polar residues; it reads PSDNSTPQASA. The span at 109–118 shows a compositional bias: pro residues; the sequence is PRPPATPPRR.

This sequence belongs to the FtsB family. As to quaternary structure, part of a complex composed of FtsB, FtsL and FtsQ.

The protein localises to the cell inner membrane. In terms of biological role, essential cell division protein. May link together the upstream cell division proteins, which are predominantly cytoplasmic, with the downstream cell division proteins, which are predominantly periplasmic. This Bordetella bronchiseptica (strain ATCC BAA-588 / NCTC 13252 / RB50) (Alcaligenes bronchisepticus) protein is Cell division protein FtsB.